The following is a 465-amino-acid chain: Probable glycine dehydrogenase (decarboxylating) subunit 1 (465 aa).

Belongs to the GcvP family. N-terminal subunit subfamily. The glycine cleavage system is composed of four proteins: P, T, L and H. In this organism, the P 'protein' is a heterodimer of two subunits.

It carries out the reaction N(6)-[(R)-lipoyl]-L-lysyl-[glycine-cleavage complex H protein] + glycine + H(+) = N(6)-[(R)-S(8)-aminomethyldihydrolipoyl]-L-lysyl-[glycine-cleavage complex H protein] + CO2. Functionally, the glycine cleavage system catalyzes the degradation of glycine. The P protein binds the alpha-amino group of glycine through its pyridoxal phosphate cofactor; CO(2) is released and the remaining methylamine moiety is then transferred to the lipoamide cofactor of the H protein. The sequence is that of Probable glycine dehydrogenase (decarboxylating) subunit 1 from Aeropyrum pernix (strain ATCC 700893 / DSM 11879 / JCM 9820 / NBRC 100138 / K1).